A 280-amino-acid polypeptide reads, in one-letter code: Bifunctional protein FolD (280 aa).

NADP(+) contacts are provided by residues 165-167 (GRS), Ser190, and Ile231.

Belongs to the tetrahydrofolate dehydrogenase/cyclohydrolase family. As to quaternary structure, homodimer.

The catalysed reaction is (6R)-5,10-methylene-5,6,7,8-tetrahydrofolate + NADP(+) = (6R)-5,10-methenyltetrahydrofolate + NADPH. It carries out the reaction (6R)-5,10-methenyltetrahydrofolate + H2O = (6R)-10-formyltetrahydrofolate + H(+). The protein operates within one-carbon metabolism; tetrahydrofolate interconversion. Catalyzes the oxidation of 5,10-methylenetetrahydrofolate to 5,10-methenyltetrahydrofolate and then the hydrolysis of 5,10-methenyltetrahydrofolate to 10-formyltetrahydrofolate. This chain is Bifunctional protein FolD, found in Moorella thermoacetica (strain ATCC 39073 / JCM 9320).